A 476-amino-acid polypeptide reads, in one-letter code: Zinc metalloproteinase/disintegrin (476 aa).

The signal sequence occupies residues 1–20 (MIQVLLVIICLADFPYQGTS). The propeptide occupies 21 to 184 (IILESGNVND…KSDEPIKASQ (164 aa)). Position 185 is a pyrrolidone carboxylic acid (glutamine 185). The Peptidase M12B domain maps to 191 to 387 (RYIELVVVAD…RNPQCILNEP (197 aa)). Ca(2+) is bound by residues glutamate 194 and aspartate 278. 3 disulfide bridges follow: cysteine 302-cysteine 382, cysteine 342-cysteine 366, and cysteine 344-cysteine 349. Zn(2+) is bound at residue histidine 327. Glutamate 328 is an active-site residue. Residues histidine 331 and histidine 337 each coordinate Zn(2+). 2 residues coordinate Ca(2+): cysteine 382 and asparagine 385. Positions 388–403 (LRTDTVSTPVSGNELL) are excised as a propeptide. Residues 395 to 476 (TPVSGNELLE…AGCPRNGFYG (82 aa)) form the Disintegrin domain. 6 disulfide bridges follow: cysteine 409/cysteine 424, cysteine 411/cysteine 419, cysteine 418/cysteine 441, cysteine 432/cysteine 438, cysteine 437/cysteine 462, and cysteine 450/cysteine 469. The short motif at 454–456 (KGD) is the Cell attachment site element.

This sequence belongs to the venom metalloproteinase (M12B) family. P-II subfamily. P-IId sub-subfamily. Homodimer; disulfide-linked (disintegrin). Zn(2+) is required as a cofactor. Expressed by the venom gland.

The protein localises to the secreted. With respect to regulation, the metalloproteinase is inhibited by EDTA, o-phenanthroline, and cysteine. Glutathione does not inhibit the enzymatic activity. In terms of biological role, shows weak degradation of alpha-fibrinogen, but has no activity on beta- and gamma-chains. Digests luteinizing hormone-releasing hormone (LH-RH) and oxidized insulin at X-Leu, X-Phe, and X-Val bonds as well as X-His bond. Does not show fibrinogen-clotting activity. Does not show hemorrhagic activity. Its function is as follows. Inhibits ADP-induced platelet aggregation. The chain is Zinc metalloproteinase/disintegrin from Gloydius brevicauda (Korean slamosa snake).